The following is a 450-amino-acid chain: NADP-specific glutamate dehydrogenase (450 aa).

Lysine 111 is an active-site residue.

This sequence belongs to the Glu/Leu/Phe/Val dehydrogenases family. In terms of assembly, homohexamer.

The catalysed reaction is L-glutamate + NADP(+) + H2O = 2-oxoglutarate + NH4(+) + NADPH + H(+). This chain is NADP-specific glutamate dehydrogenase, found in Hebeloma cylindrosporum.